The following is a 715-amino-acid chain: Protein naked cuticle homolog (715 aa).

One can recognise an EF-hand domain in the interval 18-53; sequence KKPQPLQFSFTLYDLDGHGKITKDDIAGIVSTIYES. The interval 256 to 282 is disordered; sequence SRAKRKVVRKSRSSRKASKLTDDFSRP. Residues 257–273 are compositionally biased toward basic residues; it reads RAKRKVVRKSRSSRKAS. The interval 305 to 334 is required for nuclear localization and inhibition of Wnt signaling; that stretch reads ECWKSSLCRRELIEIIRDSMVKNSLCFQPN. The tract at residues 639-690 is disordered; sequence ELHQSVQQQQGTHQQQQQPQSSVSSPTHHHHHHAGASLLGENSGSSASAAST. Composition is skewed to low complexity over residues 642–664 and 673–690; these read QSVQ…VSSP and GASL…AAST.

Belongs to the NKD family.

It is found in the cell membrane. The protein localises to the cytoplasm. Its subcellular location is the nucleus. Cell autonomous antagonist of the canonical Wnt signaling pathway. May activate a second Wnt signaling pathway that controls planar cell polarity. Required for neuroblast specification. The polypeptide is Protein naked cuticle homolog (Aedes aegypti (Yellowfever mosquito)).